The chain runs to 200 residues: Peptidyl-tRNA hydrolase (200 aa).

A tRNA-binding site is contributed by Y16. The Proton acceptor role is filled by H21. The tRNA site is built by F67, N69, and N115.

This sequence belongs to the PTH family. As to quaternary structure, monomer.

The protein localises to the cytoplasm. It carries out the reaction an N-acyl-L-alpha-aminoacyl-tRNA + H2O = an N-acyl-L-amino acid + a tRNA + H(+). In terms of biological role, hydrolyzes ribosome-free peptidyl-tRNAs (with 1 or more amino acids incorporated), which drop off the ribosome during protein synthesis, or as a result of ribosome stalling. Catalyzes the release of premature peptidyl moieties from peptidyl-tRNA molecules trapped in stalled 50S ribosomal subunits, and thus maintains levels of free tRNAs and 50S ribosomes. This chain is Peptidyl-tRNA hydrolase, found in Prochlorococcus marinus (strain AS9601).